A 467-amino-acid chain; its full sequence is Argininosuccinate lyase 1 (467 aa).

The protein belongs to the lyase 1 family. Argininosuccinate lyase subfamily.

It localises to the cytoplasm. It carries out the reaction 2-(N(omega)-L-arginino)succinate = fumarate + L-arginine. It participates in amino-acid biosynthesis; L-arginine biosynthesis; L-arginine from L-ornithine and carbamoyl phosphate: step 3/3. The sequence is that of Argininosuccinate lyase 1 from Rhizobium meliloti (strain 1021) (Ensifer meliloti).